The chain runs to 416 residues: Adipocyte plasma membrane-associated protein (416 aa).

Positions 1–32 (MSEADGLRQRRPLRPQVVTDDDGQAPEAKDGS) are disordered. An N-acetylserine modification is found at Ser-2. At 2–40 (SEADGLRQRRPLRPQVVTDDDGQAPEAKDGSSFSGRVFR) the chain is on the cytoplasmic side. A Phosphothreonine modification is found at Thr-19. A helical; Signal-anchor for type II membrane protein membrane pass occupies residues 41 to 61 (VTFLMLAVSLTVPLLGAMMLL). The Extracellular segment spans residues 62 to 416 (ESPIDPQPLS…FLCRLSLQAV (355 aa)). Residues Asn-160 and Asn-196 are each glycosylated (N-linked (GlcNAc...) asparagine).

This sequence belongs to the strictosidine synthase family. As to expression, liver, glomerular and tubular structures of the kidney, endothelial cells, arterial wall and pancreatic islets of Langerhans (at protein level). Found ubiquitously in adult as well as in embryonic tissues. In adult tissue, the highest expression is found in the liver, placenta and heart. Found on the cell surface of monocytes. In embryonic tissue, the highest expression levels is found in the liver and the kidney.

The protein resides in the membrane. Its function is as follows. Exhibits strong arylesterase activity with beta-naphthyl acetate and phenyl acetate. May play a role in adipocyte differentiation. The chain is Adipocyte plasma membrane-associated protein (APMAP) from Homo sapiens (Human).